Consider the following 218-residue polypeptide: Adenylate kinase (218 aa).

Residue 10 to 15 coordinates ATP; the sequence is GAGKGT. The segment at 30-59 is NMP; sequence STGNMLRAAVKAGTPLGLEAKKVMDAGGLV. AMP contacts are provided by residues Thr-31, Arg-36, 57–59, 85–88, and Gln-92; these read GLV and GFPR. An LID region spans residues 122-159; that stretch reads GRRVHPASGRSYHVRFNPPKAEGVDDVTGEPLVQRDDD. Residues Arg-123 and 132–133 each bind ATP; that span reads SY. Residues Arg-156 and Arg-167 each coordinate AMP. ATP is bound at residue Gly-203.

It belongs to the adenylate kinase family. As to quaternary structure, monomer.

It localises to the cytoplasm. It catalyses the reaction AMP + ATP = 2 ADP. It functions in the pathway purine metabolism; AMP biosynthesis via salvage pathway; AMP from ADP: step 1/1. Its function is as follows. Catalyzes the reversible transfer of the terminal phosphate group between ATP and AMP. Plays an important role in cellular energy homeostasis and in adenine nucleotide metabolism. The sequence is that of Adenylate kinase from Bordetella parapertussis (strain 12822 / ATCC BAA-587 / NCTC 13253).